A 410-amino-acid chain; its full sequence is Multifunctional CCA protein (410 aa).

Residues Gly8 and Arg11 each contribute to the ATP site. 2 residues coordinate CTP: Gly8 and Arg11. The Mg(2+) site is built by Asp21 and Asp23. Arg91, Arg143, and Arg146 together coordinate ATP. CTP contacts are provided by Arg91, Arg143, and Arg146. The HD domain maps to Thr232–Ile333.

It belongs to the tRNA nucleotidyltransferase/poly(A) polymerase family. Bacterial CCA-adding enzyme type 1 subfamily. Monomer. Can also form homodimers and oligomers. Requires Mg(2+) as cofactor. The cofactor is Ni(2+).

The enzyme catalyses a tRNA precursor + 2 CTP + ATP = a tRNA with a 3' CCA end + 3 diphosphate. It carries out the reaction a tRNA with a 3' CCA end + 2 CTP + ATP = a tRNA with a 3' CCACCA end + 3 diphosphate. In terms of biological role, catalyzes the addition and repair of the essential 3'-terminal CCA sequence in tRNAs without using a nucleic acid template. Adds these three nucleotides in the order of C, C, and A to the tRNA nucleotide-73, using CTP and ATP as substrates and producing inorganic pyrophosphate. tRNA 3'-terminal CCA addition is required both for tRNA processing and repair. Also involved in tRNA surveillance by mediating tandem CCA addition to generate a CCACCA at the 3' terminus of unstable tRNAs. While stable tRNAs receive only 3'-terminal CCA, unstable tRNAs are marked with CCACCA and rapidly degraded. The sequence is that of Multifunctional CCA protein from Paraburkholderia phytofirmans (strain DSM 17436 / LMG 22146 / PsJN) (Burkholderia phytofirmans).